A 369-amino-acid chain; its full sequence is UDP-N-acetylglucosamine--N-acetylmuramyl-(pentapeptide) pyrophosphoryl-undecaprenol N-acetylglucosamine transferase (369 aa).

UDP-N-acetyl-alpha-D-glucosamine-binding positions include 15 to 17 (TGG), Asn126, Arg169, Ser197, and Gln299.

It belongs to the glycosyltransferase 28 family. MurG subfamily.

It localises to the cell inner membrane. The enzyme catalyses di-trans,octa-cis-undecaprenyl diphospho-N-acetyl-alpha-D-muramoyl-L-alanyl-D-glutamyl-meso-2,6-diaminopimeloyl-D-alanyl-D-alanine + UDP-N-acetyl-alpha-D-glucosamine = di-trans,octa-cis-undecaprenyl diphospho-[N-acetyl-alpha-D-glucosaminyl-(1-&gt;4)]-N-acetyl-alpha-D-muramoyl-L-alanyl-D-glutamyl-meso-2,6-diaminopimeloyl-D-alanyl-D-alanine + UDP + H(+). It participates in cell wall biogenesis; peptidoglycan biosynthesis. Its function is as follows. Cell wall formation. Catalyzes the transfer of a GlcNAc subunit on undecaprenyl-pyrophosphoryl-MurNAc-pentapeptide (lipid intermediate I) to form undecaprenyl-pyrophosphoryl-MurNAc-(pentapeptide)GlcNAc (lipid intermediate II). This Methylorubrum extorquens (strain PA1) (Methylobacterium extorquens) protein is UDP-N-acetylglucosamine--N-acetylmuramyl-(pentapeptide) pyrophosphoryl-undecaprenol N-acetylglucosamine transferase.